We begin with the raw amino-acid sequence, 953 residues long: Isoleucine--tRNA ligase (953 aa).

Residues proline 58–histidine 68 carry the 'HIGH' region motif. Position 565 (glutamate 565) interacts with L-isoleucyl-5'-AMP. A 'KMSKS' region motif is present at residues lysine 606 to serine 610. ATP is bound at residue lysine 609. Residues cysteine 916, cysteine 919, cysteine 936, and cysteine 939 each contribute to the Zn(2+) site.

Belongs to the class-I aminoacyl-tRNA synthetase family. IleS type 1 subfamily. As to quaternary structure, monomer. Requires Zn(2+) as cofactor.

Its subcellular location is the cytoplasm. The catalysed reaction is tRNA(Ile) + L-isoleucine + ATP = L-isoleucyl-tRNA(Ile) + AMP + diphosphate. Catalyzes the attachment of isoleucine to tRNA(Ile). As IleRS can inadvertently accommodate and process structurally similar amino acids such as valine, to avoid such errors it has two additional distinct tRNA(Ile)-dependent editing activities. One activity is designated as 'pretransfer' editing and involves the hydrolysis of activated Val-AMP. The other activity is designated 'posttransfer' editing and involves deacylation of mischarged Val-tRNA(Ile). In Colwellia psychrerythraea (strain 34H / ATCC BAA-681) (Vibrio psychroerythus), this protein is Isoleucine--tRNA ligase.